The primary structure comprises 355 residues: Anthranilate phosphoribosyltransferase (355 aa).

5-phospho-alpha-D-ribose 1-diphosphate-binding positions include G102, 105–106, S110, 112–115, 130–138, and S142; these read GD, NIST, and KHGNRSVSS. G102 serves as a coordination point for anthranilate. Residue S114 participates in Mg(2+) binding. Anthranilate is bound at residue N133. Position 188 (R188) interacts with anthranilate. Residues D246 and E247 each coordinate Mg(2+).

This sequence belongs to the anthranilate phosphoribosyltransferase family. Homodimer. Requires Mg(2+) as cofactor.

It catalyses the reaction N-(5-phospho-beta-D-ribosyl)anthranilate + diphosphate = 5-phospho-alpha-D-ribose 1-diphosphate + anthranilate. Its pathway is amino-acid biosynthesis; L-tryptophan biosynthesis; L-tryptophan from chorismate: step 2/5. Catalyzes the transfer of the phosphoribosyl group of 5-phosphorylribose-1-pyrophosphate (PRPP) to anthranilate to yield N-(5'-phosphoribosyl)-anthranilate (PRA). This Pectobacterium atrosepticum (strain SCRI 1043 / ATCC BAA-672) (Erwinia carotovora subsp. atroseptica) protein is Anthranilate phosphoribosyltransferase.